A 435-amino-acid chain; its full sequence is 5-methylthioadenosine/S-adenosylhomocysteine deaminase (435 aa).

Residues histidine 65 and histidine 67 each coordinate Zn(2+). Glutamate 94, arginine 150, and histidine 189 together coordinate substrate. Histidine 216 serves as a coordination point for Zn(2+). Residues glutamate 219 and aspartate 304 each contribute to the substrate site. A Zn(2+)-binding site is contributed by aspartate 304.

The protein belongs to the metallo-dependent hydrolases superfamily. MTA/SAH deaminase family. Zn(2+) serves as cofactor.

The catalysed reaction is S-adenosyl-L-homocysteine + H2O + H(+) = S-inosyl-L-homocysteine + NH4(+). The enzyme catalyses S-methyl-5'-thioadenosine + H2O + H(+) = S-methyl-5'-thioinosine + NH4(+). Catalyzes the deamination of 5-methylthioadenosine and S-adenosyl-L-homocysteine into 5-methylthioinosine and S-inosyl-L-homocysteine, respectively. Is also able to deaminate adenosine. The chain is 5-methylthioadenosine/S-adenosylhomocysteine deaminase from Bacillus anthracis (strain A0248).